Reading from the N-terminus, the 428-residue chain is FAD-dependent monooxygenase kojA (428 aa).

Residues 52–60 (RLHKGPHYP) and 328–329 (SV) contribute to the FAD site.

The protein belongs to the aromatic-ring hydroxylase family. FAD is required as a cofactor.

Functionally, probable FAD-dependent monooxygenase; part of the gene cluster that mediates the biosynthesis of 5-hydroxy-2-hydroxymethyl-1,4-pyrone, also know as kojic acid, a by-product in the fermentation process of malting rice that acts as a chelation agent. Glucose might be converted to kojic acid by a combination of dehydrogenase and dehydratase reactions involving kojA and probably additional enzymes. The polypeptide is FAD-dependent monooxygenase kojA (Aspergillus flavus (strain ATCC 200026 / FGSC A1120 / IAM 13836 / NRRL 3357 / JCM 12722 / SRRC 167)).